A 1105-amino-acid chain; its full sequence is Probable diguanylate cyclase DgcE (1105 aa).

The next 10 helical transmembrane spans lie at 9-29 (LIALPHPLLHLVSLGLVSFIF), 38-58 (QFGTQLAPLWFPTSIMMVAFY), 64-84 (MWPGIALSCSLGNIAASILLF), 88-108 (SLNMTWTTINIVEAVVGAVLL), 127-147 (LALGSAIVPPLLGGVLVVLLT), 156-176 (FLIWVLSESIGALALVPLGLL), 190-207 (LLFESLLTLAITLTLSWL), 211-228 (YLPWPFTFIIVLLMWSAV), 236-256 (FLIFLTTVMMVSLMMAADPSL), and 270-290 (WLPFLLILLPANIMTMVMYAF). One can recognise a PAS 1 domain in the interval 300 to 370 (SETHFRNAME…QQVEKLISGE (71 aa)). PAC domains are found at residues 374–426 (YSME…VNQQ) and 501–552 (FKLE…ALFQ). Residues 553–623 (EKERLHITLD…LMENIYSADT (71 aa)) form the PAS 2 domain. The PAC 3 domain occupies 626–680 (SAIEQDVVLHCRSGGSYDVHYSITPLSTLDGSNIGSVLVIQDVTESRKMLRQLSY). The region spanning 712–845 (QRHALVFIDL…GRGRVTVYEP (134 aa)) is the GGDEF domain. Position 720 (aspartate 720) interacts with Mg(2+). 3 residues coordinate substrate: asparagine 728, histidine 733, and aspartate 737. Aspartate 763 serves as a coordination point for Mg(2+). Aspartate 763 serves as the catalytic Proton acceptor. Substrate is bound at residue arginine 783. One can recognise an EAL domain in the interval 855–1104 (AAMSLDEQWR…LLVNSSYFAI (250 aa)).

In terms of assembly, homodimer. Mg(2+) serves as cofactor.

It is found in the cell inner membrane. The catalysed reaction is 2 GTP = 3',3'-c-di-GMP + 2 diphosphate. It functions in the pathway purine metabolism; 3',5'-cyclic di-GMP biosynthesis. Functionally, catalyzes the synthesis of cyclic-di-GMP (c-di-GMP) via the condensation of 2 GTP molecules. Involved in the control of the switch from cell motility to adhesion via regulation of cellular levels of c-di-GMP. Part of a signaling cascade that regulates curli biosynthesis. The cascade is composed of two c-di-GMP control modules, in which c-di-GMP controlled by the DgcE/PdeH pair (module I) regulates the activity of the DgcM/PdeR pair (module II), which in turn regulates activity of the transcription factor MlrA and expression of the master biofilm regulator csgD. In Escherichia coli (strain K12), this protein is Probable diguanylate cyclase DgcE.